The sequence spans 268 residues: Hydroxyethylthiazole kinase (268 aa).

Met-47 contributes to the substrate binding site. Positions 123 and 170 each coordinate ATP. Residue Ala-196 participates in substrate binding.

It belongs to the Thz kinase family. It depends on Mg(2+) as a cofactor.

The enzyme catalyses 5-(2-hydroxyethyl)-4-methylthiazole + ATP = 4-methyl-5-(2-phosphooxyethyl)-thiazole + ADP + H(+). The protein operates within cofactor biosynthesis; thiamine diphosphate biosynthesis; 4-methyl-5-(2-phosphoethyl)-thiazole from 5-(2-hydroxyethyl)-4-methylthiazole: step 1/1. Functionally, catalyzes the phosphorylation of the hydroxyl group of 4-methyl-5-beta-hydroxyethylthiazole (THZ). The sequence is that of Hydroxyethylthiazole kinase from Finegoldia magna (strain ATCC 29328 / DSM 20472 / WAL 2508) (Peptostreptococcus magnus).